Here is a 117-residue protein sequence, read N- to C-terminus: Minor capsid protein p17 (117 aa).

N-linked (GlcNAc...) asparagine; by host glycosylation occurs at Asn12. Residues 39-59 traverse the membrane as a helical segment; sequence AILLGILILLVIILIIVAIVY. The segment at 96–117 is disordered; sequence KNSTSQQSHIPSDEQLAELAHS. N-linked (GlcNAc...) asparagine; by host glycosylation is present at Asn97.

The protein belongs to the asfivirus minor capsid protein p17 family. In terms of assembly, interacts with the minor capsid protein M1249L and with the hexon capsid protein p72 capsomers; these interactions form a rigid zipper structure that stabilizes the capsomers. Interacts with host STING1.

Its subcellular location is the virion membrane. The protein localises to the host endoplasmic reticulum membrane. Together with the penton and the other minor capsid proteins (M1249L, p49), forms a complicated network immediately below the outer capsid shell, stabilizing the whole capsid. Three copies of p17 encircle each p72 capsomer in the inner capsid shell, anchoring p72 capsomers on the inner membrane. Required for the assembly of the capsid and icosahedral morphogenesis. Additionally, inhibits the host cGAS-STING pathway through its interaction with STING1 and subsequent interference of the recruitment of downstream components TBK1 and IKBKE. The chain is Minor capsid protein p17 from African swine fever virus (isolate Tick/South Africa/Pretoriuskop Pr4/1996) (ASFV).